The sequence spans 632 residues: Phosphatidylinositol 3,4,5-trisphosphate 3-phosphatase and protein-tyrosine-phosphatase PTEN2B (632 aa).

Residues 1 to 12 show a composition bias toward polar residues; it reads METDPANSSSKS. A disordered region spans residues 1–98; it reads METDPANSSS…RESPPSIFSS (98 aa). Over residues 39 to 48 the composition is skewed to basic and acidic residues; sequence SAEREAHEDS. Over residues 63–73 the composition is skewed to polar residues; that stretch reads MPASSTGSEPL. A compositionally biased stretch (low complexity) spans 87 to 98; it reads SPRESPPSIFSS. Residues 189–368 enclose the Phosphatase tensin-type domain; the sequence is RRYQEGEFDL…KYYERVQNQF (180 aa). Residue C307 is the Phosphocysteine intermediate of the active site. The 128-residue stretch at 375–502 folds into the C2 tensin-type domain; the sequence is ERRCMLRGFR…FHVEIVMIEP (128 aa). The disordered stretch occupies residues 504-603; sequence NSQPTKSKSD…SGHYNPIPNN (100 aa). Over residues 505–527 the composition is skewed to low complexity; sequence SQPTKSKSDSTQQQSQSSSSADS. A compositionally biased stretch (acidic residues) spans 535–549; it reads KDDDVFSDSDGEEEG. S541 carries the phosphoserine modification. Residues 550 to 571 show a composition bias toward polar residues; it reads NSQSYSTNEKTASSMHTTSKPH. The segment covering 584 to 594 has biased composition (low complexity); the sequence is ANRSVTSSSSS.

It belongs to the PTEN phosphatase protein family. Expressed, at low levels, in seedlings, roots, stems, leaves, flowers and siliques. However, at protein level, not observed in older leaves, flowers and siliques.

The enzyme catalyses O-phospho-L-tyrosyl-[protein] + H2O = L-tyrosyl-[protein] + phosphate. The catalysed reaction is a 1,2-diacyl-sn-glycero-3-phospho-(1D-myo-inositol-3,4,5-trisphosphate) + H2O = a 1,2-diacyl-sn-glycero-3-phospho-(1D-myo-inositol-4,5-bisphosphate) + phosphate. In terms of biological role, protein tyrosine phosphatase that also exhibits a weak lipid phosphatase activity towards PtdIns(3)P. In Arabidopsis thaliana (Mouse-ear cress), this protein is Phosphatidylinositol 3,4,5-trisphosphate 3-phosphatase and protein-tyrosine-phosphatase PTEN2B.